Here is a 174-residue protein sequence, read N- to C-terminus: Protein GrpE (174 aa).

The segment at 1–35 (MAQDIKNEEVEEVQEEEVVKTAEETTPEKSELDLA) is disordered. Residues 17-35 (EVVKTAEETTPEKSELDLA) are compositionally biased toward basic and acidic residues.

It belongs to the GrpE family. In terms of assembly, homodimer.

The protein resides in the cytoplasm. Its function is as follows. Participates actively in the response to hyperosmotic and heat shock by preventing the aggregation of stress-denatured proteins, in association with DnaK and GrpE. It is the nucleotide exchange factor for DnaK and may function as a thermosensor. Unfolded proteins bind initially to DnaJ; upon interaction with the DnaJ-bound protein, DnaK hydrolyzes its bound ATP, resulting in the formation of a stable complex. GrpE releases ADP from DnaK; ATP binding to DnaK triggers the release of the substrate protein, thus completing the reaction cycle. Several rounds of ATP-dependent interactions between DnaJ, DnaK and GrpE are required for fully efficient folding. In Streptococcus pneumoniae serotype 4 (strain ATCC BAA-334 / TIGR4), this protein is Protein GrpE.